Consider the following 462-residue polypeptide: ATP synthase subunit beta (462 aa).

151–158 (GGAGVGKT) serves as a coordination point for ATP.

Belongs to the ATPase alpha/beta chains family. As to quaternary structure, F-type ATPases have 2 components, CF(1) - the catalytic core - and CF(0) - the membrane proton channel. CF(1) has five subunits: alpha(3), beta(3), gamma(1), delta(1), epsilon(1). CF(0) has four main subunits: a(1), b(1), b'(1) and c(9-12).

The protein resides in the cell inner membrane. The enzyme catalyses ATP + H2O + 4 H(+)(in) = ADP + phosphate + 5 H(+)(out). Its function is as follows. Produces ATP from ADP in the presence of a proton gradient across the membrane. The catalytic sites are hosted primarily by the beta subunits. The chain is ATP synthase subunit beta from Chlorobium chlorochromatii (strain CaD3).